Consider the following 246-residue polypeptide: Probable transcriptional regulatory protein YebC (246 aa).

Residues 1–20 (MAGHSKWANTRHRKAAQDAK) are disordered.

Belongs to the TACO1 family.

The protein resides in the cytoplasm. The protein is Probable transcriptional regulatory protein YebC of Escherichia coli O6:K15:H31 (strain 536 / UPEC).